The primary structure comprises 198 residues: Small ribosomal subunit protein uS4 (198 aa).

The 64-residue stretch at 91–154 (SRLDNVVYRL…KNLNIVQEAL (64 aa)) folds into the S4 RNA-binding domain.

Belongs to the universal ribosomal protein uS4 family. In terms of assembly, part of the 30S ribosomal subunit. Contacts protein S5. The interaction surface between S4 and S5 is involved in control of translational fidelity.

Its function is as follows. One of the primary rRNA binding proteins, it binds directly to 16S rRNA where it nucleates assembly of the body of the 30S subunit. In terms of biological role, with S5 and S12 plays an important role in translational accuracy. The protein is Small ribosomal subunit protein uS4 of Aster yellows witches'-broom phytoplasma (strain AYWB).